We begin with the raw amino-acid sequence, 365 residues long: Chaperone protein DnaJ (365 aa).

Residues Asp-4 to Gly-70 form the J domain. A CR-type zinc finger spans residues Gly-139–Asp-220. Cys-152, Cys-155, Cys-168, Cys-171, Cys-194, Cys-197, Cys-208, and Cys-211 together coordinate Zn(2+). CXXCXGXG motif repeat units lie at residues Cys-152 to Gly-159, Cys-168 to Gly-175, Cys-194 to Gly-201, and Cys-208 to Gly-215.

It belongs to the DnaJ family. As to quaternary structure, homodimer. Zn(2+) is required as a cofactor.

It localises to the cytoplasm. In terms of biological role, participates actively in the response to hyperosmotic and heat shock by preventing the aggregation of stress-denatured proteins and by disaggregating proteins, also in an autonomous, DnaK-independent fashion. Unfolded proteins bind initially to DnaJ; upon interaction with the DnaJ-bound protein, DnaK hydrolyzes its bound ATP, resulting in the formation of a stable complex. GrpE releases ADP from DnaK; ATP binding to DnaK triggers the release of the substrate protein, thus completing the reaction cycle. Several rounds of ATP-dependent interactions between DnaJ, DnaK and GrpE are required for fully efficient folding. Also involved, together with DnaK and GrpE, in the DNA replication of plasmids through activation of initiation proteins. The chain is Chaperone protein DnaJ from Thermoplasma volcanium (strain ATCC 51530 / DSM 4299 / JCM 9571 / NBRC 15438 / GSS1).